We begin with the raw amino-acid sequence, 231 residues long: High-affinity zinc uptake system ATP-binding protein ZnuC (231 aa).

The ABC transporter domain maps to 4–230; sequence VSLKDIVFGY…CLTWNSCDEL (227 aa).

This sequence belongs to the ABC transporter superfamily. In terms of assembly, the complex is composed of two ATP-binding proteins (ZnuC), two transmembrane proteins (ZnuB) and a solute-binding protein (ZnuA).

Its subcellular location is the cell membrane. The catalysed reaction is Zn(2+)(out) + ATP(in) + H2O(in) = Zn(2+)(in) + ADP(in) + phosphate(in) + H(+)(in). In terms of biological role, part of the high-affinity ABC transporter complex ZnuABC involved in zinc import. Responsible for energy coupling to the transport system. ZnuABC-mediated zinc transport is required for comF expression and competence development. In Bacillus subtilis (strain 168), this protein is High-affinity zinc uptake system ATP-binding protein ZnuC (znuC).